Here is a 286-residue protein sequence, read N- to C-terminus: Urease accessory protein UreD 2 (286 aa).

The protein belongs to the UreD family. UreD, UreF and UreG form a complex that acts as a GTP-hydrolysis-dependent molecular chaperone, activating the urease apoprotein by helping to assemble the nickel containing metallocenter of UreC. The UreE protein probably delivers the nickel.

Its subcellular location is the cytoplasm. Its function is as follows. Required for maturation of urease via the functional incorporation of the urease nickel metallocenter. The protein is Urease accessory protein UreD 2 of Bradyrhizobium sp. (strain BTAi1 / ATCC BAA-1182).